The primary structure comprises 329 residues: UDP-sugar transporter sqv-7 (329 aa).

9 helical membrane passes run 15-34 (SAVF…KILL), 41-63 (SFLF…AKMF), 86-108 (YFFN…FTVL), 129-151 (SKAV…IYDL), 155-174 (ALGY…LGVY), 187-209 (YGLM…QYTG), 224-246 (TSSV…YSLV), 253-275 (SALT…GMFS), and 280-302 (VFQW…YTYV).

It belongs to the TPT transporter family. SLC35D subfamily.

Its subcellular location is the golgi apparatus membrane. Acts as a transporter of UDP-glucuronic acid (UDP-GlcA), UDP-N-acetylgalactosamine (UDP-GalNAc) and UDP-galactose (UDP-Gal) from the cytoplasm into the Golgi lumen. Involved in the biosynthesis of glycoconjugates that play a pivotal role in development. Involved in the synthesis of chondroitin sulfate and heparan sulfate proteoglycans. Required for embryonic development. Involved in vulva epithelium invagination and embryonic development. Involved in the directed migration of hermaphrodite-specific neurons. This is UDP-sugar transporter sqv-7 (sqv-7) from Caenorhabditis elegans.